A 292-amino-acid polypeptide reads, in one-letter code: Probable endonuclease lcl3 (292 aa).

The interval M1–A27 is disordered. Polar residues predominate over residues Q17–A27. A helical transmembrane segment spans residues I45–F61. The region spanning R83–D250 is the TNase-like domain. R134 is a catalytic residue. D139 serves as a coordination point for Ca(2+). Active-site residues include E142 and R182. Residues G257–K292 are disordered. Positions G281 to K292 are enriched in gly residues.

Belongs to the LCL3 family.

It localises to the mitochondrion. The protein resides in the membrane. The chain is Probable endonuclease lcl3 (lcl3) from Penicillium rubens (strain ATCC 28089 / DSM 1075 / NRRL 1951 / Wisconsin 54-1255) (Penicillium chrysogenum).